A 161-amino-acid chain; its full sequence is Low molecular weight phosphotyrosine protein phosphatase (161 aa).

The active-site Nucleophile is the C14. R20 functions as the Transition state stabilizer in the catalytic mechanism. A Phosphoserine modification is found at S57. D133 functions as the Proton donor in the catalytic mechanism.

It belongs to the low molecular weight phosphotyrosine protein phosphatase family.

It is found in the cytoplasm. It carries out the reaction O-phospho-L-tyrosyl-[protein] + H2O = L-tyrosyl-[protein] + phosphate. It catalyses the reaction a phosphate monoester + H2O = an alcohol + phosphate. Acts on tyrosine phosphorylated proteins, low-MW aryl phosphates and natural and synthetic acyl phosphates. This chain is Low molecular weight phosphotyrosine protein phosphatase, found in Saccharomyces cerevisiae (strain ATCC 204508 / S288c) (Baker's yeast).